We begin with the raw amino-acid sequence, 201 residues long: Transgelin (201 aa).

Residue Ala-2 is modified to N-acetylalanine. One can recognise a Calponin-homology (CH) domain in the interval 24-137 (EELEERLVEW…RTVMALGSLA (114 aa)). Residues 154–161 (KKAQEHKR) are could be involved in actin-binding. The residue at position 166 (Ser-166) is a Phosphoserine. At Lys-172 the chain carries N6-acetyllysine. The stretch at 175 to 200 (IGLQMGSNRGASQAGMTGYGRPRQII) is one Calponin-like repeat. Ser-181 bears the Phosphoserine mark. Arg-183 bears the Omega-N-methylarginine mark.

It belongs to the calponin family. As to expression, smooth muscle and mesenchymal cells but not in skeletal muscle or lymphocytes.

The protein resides in the cytoplasm. Actin cross-linking/gelling protein. This chain is Transgelin (Tagln), found in Rattus norvegicus (Rat).